The primary structure comprises 691 residues: DNA ligase (691 aa).

Residues 1–22 form a disordered region; sequence MTTAEDVAGNPYISDPRTDFES. NAD(+) is bound by residues 59 to 63, 107 to 108, and glutamate 137; these read DRAYD and SI. Lysine 139 serves as the catalytic N6-AMP-lysine intermediate. NAD(+) contacts are provided by arginine 160, glutamate 196, lysine 311, and lysine 335. Positions 426, 429, 442, and 448 each coordinate Zn(2+). In terms of domain architecture, BRCT spans 608-691; that stretch reads TDGDALDGQT…EELLDDAGVL (84 aa). The segment at 637–667 is disordered; the sequence is ERNDGSATSSVSGNTDYLVLGDNPGQRKQDD. Residues 641 to 651 show a composition bias toward polar residues; that stretch reads GSATSSVSGNT.

It belongs to the NAD-dependent DNA ligase family. LigA subfamily. It depends on Mg(2+) as a cofactor. Mn(2+) is required as a cofactor.

It catalyses the reaction NAD(+) + (deoxyribonucleotide)n-3'-hydroxyl + 5'-phospho-(deoxyribonucleotide)m = (deoxyribonucleotide)n+m + AMP + beta-nicotinamide D-nucleotide.. In terms of biological role, DNA ligase that catalyzes the formation of phosphodiester linkages between 5'-phosphoryl and 3'-hydroxyl groups in double-stranded DNA using NAD as a coenzyme and as the energy source for the reaction. It is essential for DNA replication and repair of damaged DNA. The chain is DNA ligase from Haloarcula marismortui (strain ATCC 43049 / DSM 3752 / JCM 8966 / VKM B-1809) (Halobacterium marismortui).